A 213-amino-acid polypeptide reads, in one-letter code: Kynurenine formamidase (213 aa).

Residue Trp-18 coordinates substrate. His-48, His-52, and Asp-54 together coordinate Zn(2+). Catalysis depends on His-58, which acts as the Proton donor/acceptor. 2 residues coordinate Zn(2+): His-160 and Glu-172.

The protein belongs to the Cyclase 1 superfamily. KynB family. Homodimer. Requires Zn(2+) as cofactor.

It catalyses the reaction N-formyl-L-kynurenine + H2O = L-kynurenine + formate + H(+). It functions in the pathway amino-acid degradation; L-tryptophan degradation via kynurenine pathway; L-kynurenine from L-tryptophan: step 2/2. In terms of biological role, catalyzes the hydrolysis of N-formyl-L-kynurenine to L-kynurenine, the second step in the kynurenine pathway of tryptophan degradation. The protein is Kynurenine formamidase of Burkholderia pseudomallei (strain 1106a).